Consider the following 283-residue polypeptide: Diphthine methyl ester synthase (283 aa).

S-adenosyl-L-methionine-binding positions include Leu-9, Asp-84, Gly-87, 112-113 (SI), Leu-163, Met-221, and His-246.

The protein belongs to the diphthine synthase family.

The protein localises to the cytoplasm. It carries out the reaction 2-[(3S)-amino-3-carboxypropyl]-L-histidyl-[translation elongation factor 2] + 4 S-adenosyl-L-methionine = diphthine methyl ester-[translation elongation factor 2] + 4 S-adenosyl-L-homocysteine + 3 H(+). It participates in protein modification; peptidyl-diphthamide biosynthesis. S-adenosyl-L-methionine-dependent methyltransferase that catalyzes four methylations of the modified target histidine residue in translation elongation factor 2 (EF-2), to form an intermediate called diphthine methyl ester. The four successive methylation reactions represent the second step of diphthamide biosynthesis. The protein is Diphthine methyl ester synthase (dph5) of Schizosaccharomyces pombe (strain 972 / ATCC 24843) (Fission yeast).